Here is a 96-residue protein sequence, read N- to C-terminus: Cytochrome c-553 (96 aa).

A signal peptide spans 1 to 19 (MKKVIMALGVLAFANALMA). 4 residues coordinate heme c: Cys-29, Cys-32, His-33, and Met-73.

The protein belongs to the cytochrome c family. In terms of processing, binds 1 heme c group covalently per subunit.

It is found in the periplasm. In terms of biological role, natural electron acceptor for a formate dehydrogenase. In Helicobacter pylori (strain ATCC 700392 / 26695) (Campylobacter pylori), this protein is Cytochrome c-553.